The following is a 189-amino-acid chain: Pyridoxal 5'-phosphate synthase subunit PdxT (189 aa).

48 to 50 (GES) is a binding site for L-glutamine. Residue Cys-80 is the Nucleophile of the active site. Residues Arg-107 and 136-137 (IR) contribute to the L-glutamine site. Active-site charge relay system residues include His-172 and Glu-174.

This sequence belongs to the glutaminase PdxT/SNO family. In the presence of PdxS, forms a dodecamer of heterodimers. Only shows activity in the heterodimer.

It carries out the reaction aldehydo-D-ribose 5-phosphate + D-glyceraldehyde 3-phosphate + L-glutamine = pyridoxal 5'-phosphate + L-glutamate + phosphate + 3 H2O + H(+). It catalyses the reaction L-glutamine + H2O = L-glutamate + NH4(+). It participates in cofactor biosynthesis; pyridoxal 5'-phosphate biosynthesis. Its function is as follows. Catalyzes the hydrolysis of glutamine to glutamate and ammonia as part of the biosynthesis of pyridoxal 5'-phosphate. The resulting ammonia molecule is channeled to the active site of PdxS. In Ruminiclostridium cellulolyticum (strain ATCC 35319 / DSM 5812 / JCM 6584 / H10) (Clostridium cellulolyticum), this protein is Pyridoxal 5'-phosphate synthase subunit PdxT.